Consider the following 215-residue polypeptide: Deoxyribose-phosphate aldolase (215 aa).

Residue Asp-90 is the Proton donor/acceptor of the active site. Residue Lys-152 is the Schiff-base intermediate with acetaldehyde of the active site. Lys-181 (proton donor/acceptor) is an active-site residue.

It belongs to the DeoC/FbaB aldolase family. DeoC type 1 subfamily.

It is found in the cytoplasm. The enzyme catalyses 2-deoxy-D-ribose 5-phosphate = D-glyceraldehyde 3-phosphate + acetaldehyde. The protein operates within carbohydrate degradation; 2-deoxy-D-ribose 1-phosphate degradation; D-glyceraldehyde 3-phosphate and acetaldehyde from 2-deoxy-alpha-D-ribose 1-phosphate: step 2/2. Functionally, catalyzes a reversible aldol reaction between acetaldehyde and D-glyceraldehyde 3-phosphate to generate 2-deoxy-D-ribose 5-phosphate. The chain is Deoxyribose-phosphate aldolase from Ureaplasma urealyticum serovar 10 (strain ATCC 33699 / Western).